Here is a 294-residue protein sequence, read N- to C-terminus: Cytidine deaminase (294 aa).

CMP/dCMP-type deaminase domains are found at residues 48-168 (DEDA…FGPK) and 186-294 (LTGD…VLLA). 89–91 (NME) is a substrate binding site. H102 is a Zn(2+) binding site. The active-site Proton donor is the E104. 2 residues coordinate Zn(2+): C129 and C132.

The protein belongs to the cytidine and deoxycytidylate deaminase family. As to quaternary structure, homodimer. It depends on Zn(2+) as a cofactor.

The catalysed reaction is cytidine + H2O + H(+) = uridine + NH4(+). The enzyme catalyses 2'-deoxycytidine + H2O + H(+) = 2'-deoxyuridine + NH4(+). In terms of biological role, this enzyme scavenges exogenous and endogenous cytidine and 2'-deoxycytidine for UMP synthesis. In Escherichia coli O17:K52:H18 (strain UMN026 / ExPEC), this protein is Cytidine deaminase.